Here is a 104-residue protein sequence, read N- to C-terminus: Astakine (104 aa).

The first 22 residues, 1–22 (MKMRGVSVGVLVVAMMSGLAMA), serve as a signal peptide directing secretion. 5 disulfides stabilise this stretch: Cys25–Cys38, Cys32–Cys50, Cys37–Cys76, Cys60–Cys84, and Cys78–Cys91.

The protein belongs to the AVIT (prokineticin) family.

The protein resides in the secreted. Cytokine directly involved in hematopoiesis. The polypeptide is Astakine (Pacifastacus leniusculus (Signal crayfish)).